The sequence spans 897 residues: Translation initiation factor IF-2 (897 aa).

2 disordered regions span residues 69–88 (RKTK…KEVQ) and 95–304 (RTYV…NAMK). Basic and acidic residues predominate over residues 101-161 (SALEDEQRQA…EEKARIEAQQ (61 aa)). Over residues 162-179 (KARQAQQPAKAAGSTAQQ) the composition is skewed to low complexity. Composition is skewed to basic and acidic residues over residues 180–196 (EAEK…KRQQ), 203–217 (KAEE…EARV), 226–239 (WAEE…ESSD), and 277–286 (RREDDRDARN). Over residues 287–296 (PRARKGKRGK) the composition is skewed to basic residues. In terms of domain architecture, tr-type G spans 397–566 (PRAPVVTIMG…LIQSEVLELK (170 aa)). A G1 region spans residues 406 to 413 (GHVDHGKT). 406–413 (GHVDHGKT) is a binding site for GTP. A G2 region spans residues 431–435 (GITQH). Positions 452-455 (DTPG) are G3. GTP-binding positions include 452-456 (DTPGH) and 506-509 (NKID). A G4 region spans residues 506-509 (NKID). A G5 region spans residues 542-544 (SAK).

Belongs to the TRAFAC class translation factor GTPase superfamily. Classic translation factor GTPase family. IF-2 subfamily.

It is found in the cytoplasm. One of the essential components for the initiation of protein synthesis. Protects formylmethionyl-tRNA from spontaneous hydrolysis and promotes its binding to the 30S ribosomal subunits. Also involved in the hydrolysis of GTP during the formation of the 70S ribosomal complex. The protein is Translation initiation factor IF-2 of Aeromonas hydrophila subsp. hydrophila (strain ATCC 7966 / DSM 30187 / BCRC 13018 / CCUG 14551 / JCM 1027 / KCTC 2358 / NCIMB 9240 / NCTC 8049).